The following is a 39-amino-acid chain: Photosystem II reaction center protein Y (39 aa).

The chain crosses the membrane as a helical span at residues 7 to 25 (VLVVLLPVLLAGGWALKNI).

The protein belongs to the PsbY family. PSII is composed of 1 copy each of membrane proteins PsbA, PsbB, PsbC, PsbD, PsbE, PsbF, PsbH, PsbI, PsbJ, PsbK, PsbL, PsbM, PsbT, PsbX, PsbY, PsbZ, Psb30/Ycf12, peripheral proteins PsbO, CyanoQ (PsbQ), PsbU, PsbV and a large number of cofactors. It forms dimeric complexes.

Its subcellular location is the cellular thylakoid membrane. Loosely associated component of the core of photosystem II (PSII), it is not always seen in crystals. PSII is a light-driven water plastoquinone oxidoreductase, using light energy to abstract electrons from H(2)O, generating a proton gradient subsequently used for ATP formation. In Cyanothece sp. (strain PCC 7425 / ATCC 29141), this protein is Photosystem II reaction center protein Y.